The chain runs to 364 residues: Growth hormone secretagogue receptor type 1 (364 aa).

Residues 1-40 (MWNATPSEEPEPNVTLDLDWDASPGNDSLPDELLPLFPAP) lie on the Extracellular side of the membrane. N-linked (GlcNAc...) asparagine glycans are attached at residues asparagine 13 and asparagine 26. A helical membrane pass occupies residues 41 to 66 (LLAGVTATCVALFVVGISGNLLTMLV). Residues 67–72 (VSRFRE) are Cytoplasmic-facing. A helical membrane pass occupies residues 73 to 96 (LRTTTNLYLSSMAFSDLLIFLCMP). The Extracellular portion of the chain corresponds to 97-117 (LDLVRLWQYRPWNFGDLLCKL). A disulfide bridge links cysteine 115 with cysteine 197. The chain crosses the membrane as a helical span at residues 118-139 (FQFVSESCTYATVLTITALSVE). Residues 140 to 162 (RYFAICFPLRAKVVVTKGRVKLV) lie on the Cytoplasmic side of the membrane. A helical transmembrane segment spans residues 163–183 (ILVIWAVAFCSAGPIFVLVGV). Residues 184–211 (EHENGTDPRDTNECRATEFAVRSGLLTV) lie on the Extracellular side of the membrane. Asparagine 187 carries N-linked (GlcNAc...) asparagine glycosylation. Residues 212-235 (MVWVSSVFFFLPVFCLTVLYSLIG) form a helical membrane-spanning segment. Residues 236-263 (RKLWRRRGDAAVGASLRDQNHKQTVKML) lie on the Cytoplasmic side of the membrane. The chain crosses the membrane as a helical span at residues 264-285 (AVVVFAFILCWLPFHVGRYLFS). Residues 286-302 (KSFEPGSLEIAQISQYC) are Extracellular-facing. Residues 303–326 (NLVSFVLFYLSAAINPILYNIMSK) form a helical membrane-spanning segment. Residues 327 to 364 (KYRVAVFKLLGFESFSQRKLSTLKDESSRAWTKSSINT) lie on the Cytoplasmic side of the membrane.

This sequence belongs to the G-protein coupled receptor 1 family.

The protein localises to the cell membrane. Its function is as follows. Receptor for ghrelin, coupled to G-alpha-11 proteins. Stimulates growth hormone secretion. Also binds other growth hormone releasing peptides (GHRP) (e.g. Met-enkephalin and GHRP-6) as well as non-peptide, low molecular weight secretagogues (e.g. L-692,429, MK-0677, adenosine). The chain is Growth hormone secretagogue receptor type 1 (Ghsr) from Rattus norvegicus (Rat).